Here is a 484-residue protein sequence, read N- to C-terminus: Trigger factor (484 aa).

The 82-residue stretch at 162 to 243 folds into the PPIase FKBP-type domain; it reads GDFISIDLSA…VKSVKERELP (82 aa). The segment at 427 to 484 is disordered; sequence DGNTIDTSEFFGKPPENDVTDLLDDDADGDAGVDADGDTENSAEPADADSADTAQGAG. Acidic residues predominate over residues 444–476; sequence DVTDLLDDDADGDAGVDADGDTENSAEPADADS.

This sequence belongs to the FKBP-type PPIase family. Tig subfamily.

The protein localises to the cytoplasm. The catalysed reaction is [protein]-peptidylproline (omega=180) = [protein]-peptidylproline (omega=0). In terms of biological role, involved in protein export. Acts as a chaperone by maintaining the newly synthesized protein in an open conformation. Functions as a peptidyl-prolyl cis-trans isomerase. This Mycobacterium ulcerans (strain Agy99) protein is Trigger factor.